A 64-amino-acid polypeptide reads, in one-letter code: Large ribosomal subunit protein bL35 (64 aa).

It belongs to the bacterial ribosomal protein bL35 family.

This Desulforamulus reducens (strain ATCC BAA-1160 / DSM 100696 / MI-1) (Desulfotomaculum reducens) protein is Large ribosomal subunit protein bL35.